The sequence spans 376 residues: Non-structural protein NS2 (376 aa).

Over residues 163–188 (EEREKGAVEQPHKPAFKTERGMNRPD) the composition is skewed to basic and acidic residues. The disordered stretch occupies residues 163 to 201 (EEREKGAVEQPHKPAFKTERGMNRPDSDEDQNPAGGVVN).

This sequence belongs to the orbivirus non-structural protein NS2 family.

Single-stranded RNA-binding protein. The protein is Non-structural protein NS2 (Segment-8) of Antilocapra americana (Pronghorn).